A 315-amino-acid chain; its full sequence is Small ribosomal subunit biogenesis GTPase RsgA (315 aa).

The region spanning 79 to 243 (LSKESHILGA…LIDTPGIKGF (165 aa)) is the CP-type G domain. GTP-binding positions include 128–131 (NKID) and 182–190 (GHSGVGKSS). 4 residues coordinate Zn(2+): cysteine 267, cysteine 272, histidine 274, and cysteine 280.

The protein belongs to the TRAFAC class YlqF/YawG GTPase family. RsgA subfamily. Monomer. Associates with 30S ribosomal subunit, binds 16S rRNA. Zn(2+) serves as cofactor.

It is found in the cytoplasm. One of several proteins that assist in the late maturation steps of the functional core of the 30S ribosomal subunit. Helps release RbfA from mature subunits. May play a role in the assembly of ribosomal proteins into the subunit. Circularly permuted GTPase that catalyzes slow GTP hydrolysis, GTPase activity is stimulated by the 30S ribosomal subunit. This Porphyromonas gingivalis (strain ATCC BAA-308 / W83) protein is Small ribosomal subunit biogenesis GTPase RsgA.